Consider the following 159-residue polypeptide: Ribosomal RNA large subunit methyltransferase H (159 aa).

G108 serves as a coordination point for S-adenosyl-L-methionine.

Belongs to the RNA methyltransferase RlmH family. Homodimer.

It localises to the cytoplasm. The catalysed reaction is pseudouridine(1915) in 23S rRNA + S-adenosyl-L-methionine = N(3)-methylpseudouridine(1915) in 23S rRNA + S-adenosyl-L-homocysteine + H(+). In terms of biological role, specifically methylates the pseudouridine at position 1915 (m3Psi1915) in 23S rRNA. The sequence is that of Ribosomal RNA large subunit methyltransferase H from Lactobacillus johnsonii (strain CNCM I-12250 / La1 / NCC 533).